Here is a 200-residue protein sequence, read N- to C-terminus: Phosphatidylethanolamine N-methyltransferase B (200 aa).

Over 1–8 (MEKGLSSD) the chain is Lumenal. Positions 9–29 (LIIAFVAIVLHVVNYNVTAQF) form an intramembrane region, helical. The Lumenal portion of the chain corresponds to 30 to 39 (EYKTRYFTKL). Residues 40–58 (IGRNAIYYYAVFLIISALI) form a helical membrane-spanning segment. The Cytoplasmic portion of the chain corresponds to 59-86 (RDHFINVAVLSDKDSIILFPTEIANMIG). Residues 87–107 (DSCFIFGILLNIWTLKALGIK) traverse the membrane as a helical segment. 91 to 93 (IFG) lines the S-adenosyl-L-methionine pocket. Residues 108–150 (GMYNGDSFGHIMDSPVTGGPYQFFSDPQYVGTTIAALGVAIRN) are Lumenal-facing. The helical transmembrane segment at 151–171 (QSIYGFLCTILVGVVFYISAT) threads the bilayer. At 172 to 200 (FVETPHLKNIYSNRSYSKINFKNLKSLKN) the chain is on the cytoplasmic side. 174–175 (ET) contacts S-adenosyl-L-methionine.

Belongs to the class VI-like SAM-binding methyltransferase superfamily. PEMT/PEM2 methyltransferase family.

Its subcellular location is the endoplasmic reticulum membrane. The protein resides in the mitochondrion membrane. It carries out the reaction a 1,2-diacyl-sn-glycero-3-phospho-N-methylethanolamine + S-adenosyl-L-methionine = a 1,2-diacyl-sn-glycero-3-phospho-N,N-dimethylethanolamine + S-adenosyl-L-homocysteine + H(+). The catalysed reaction is a 1,2-diacyl-sn-glycero-3-phospho-N,N-dimethylethanolamine + S-adenosyl-L-methionine = a 1,2-diacyl-sn-glycero-3-phosphocholine + S-adenosyl-L-homocysteine + H(+). It catalyses the reaction a 1,2-diacyl-sn-glycero-3-phosphoethanolamine + S-adenosyl-L-methionine = a 1,2-diacyl-sn-glycero-3-phospho-N-methylethanolamine + S-adenosyl-L-homocysteine + H(+). It functions in the pathway phospholipid metabolism; phosphatidylcholine biosynthesis. Its function is as follows. Catalyzes the three sequential steps of the methylation pathway of phosphatidylcholine biosynthesis, the SAM-dependent methylation of phosphatidylethanolamine (PE) to phosphatidylmonomethylethanolamine (PMME), PMME to phosphatidyldimethylethanolamine (PDME), and PDME to phosphatidylcholine (PC). The sequence is that of Phosphatidylethanolamine N-methyltransferase B (pemtB) from Dictyostelium discoideum (Social amoeba).